The chain runs to 618 residues: Rho guanine nucleotide exchange factor 25 (618 aa).

Disordered stretches follow at residues 26–63 (CAVPGQEGPPERDPLGPGSTKTESDCIEEDQTGQREPE) and 169–193 (GPGDKAQPAEEETLSQAPKNEEEQK). Residues 199-375 (RSMFVLGELV…CFVPKRCNDM (177 aa)) form the DH domain. The segment at 317–338 (LGHRLQLNDLLIKPVQRIMKYQ) is important for binding to Rho GTPases. The PH domain maps to 387 to 505 (KLTAQGKLLG…WIKQVAQILE (119 aa)). The sufficient to bind activated GNAQ stretch occupies residues 506 to 532 (SQRDFLNALQSPIEYQRRESQTNSLGR). Disordered stretches follow at residues 521–556 (QRRESQTNSLGRPGGPWVGSPGRMRPGDLAQASMHT) and 584–604 (ALSDTPQTPHDSPALPTVNTP). Residues 584-593 (ALSDTPQTPH) are compositionally biased toward polar residues.

Interacts with activated GNAQ and GNA11. Interacts (via the DH domain) with POPDC1 (via the C-terminus cytoplasmic tail). Interacts with RHOA, CDC42 and RAC1. Highly expressed in excitable tissues, such as brain, heart and muscle. Elevated expression in hippocampus and cerebellum.

It localises to the cytoplasm. The protein resides in the myofibril. Its subcellular location is the sarcomere. The protein localises to the cell membrane. Functionally, may play a role in actin cytoskeleton reorganization in different tissues since its activation induces formation of actin stress fibers. It works as a guanine nucleotide exchange factor for Rho family of small GTPases. Links specifically G alpha q/11-coupled receptors to RHOA activation. May be an important regulator of processes involved in axon and dendrite formation. In neurons seems to be an exchange factor primarily for RAC1. Involved in skeletal myogenesis. The polypeptide is Rho guanine nucleotide exchange factor 25 (Arhgef25) (Mus musculus (Mouse)).